A 267-amino-acid chain; its full sequence is Putative transcription factor Ovo-like 1 (267 aa).

4 consecutive C2H2-type zinc fingers follow at residues 118–140 (FTCH…MKCH), 146–168 (HLCT…VRTH), 174–197 (YKCS…KKIH), and 213–236 (YVCE…KERH).

Expressed in skin, testis, kidney and weakly in lung. Not detected in heart, brain, spleen, liver and skeletal muscle.

Its subcellular location is the nucleus. Its function is as follows. Putative transcription factor. Involved in hair formation and spermatogenesis. May function in the differentiation and/or maintenance of the urogenital system. This chain is Putative transcription factor Ovo-like 1 (Ovol1), found in Mus musculus (Mouse).